We begin with the raw amino-acid sequence, 185 residues long: Prenylated Rab acceptor protein 1 (185 aa).

Residues 1–78 (MAAQKDQQKD…RNVEYYQSNY (78 aa)) are Cytoplasmic-facing. Positions 30-54 (AGREWLERRRATIRPWSTFVDQQRF) are required for interaction with prenylated RAB3A and VAMP2. The next 2 helical transmembrane spans lie at 79 to 94 (VFVFLGLILYCVVTSP) and 95 to 112 (MLLVALAVFFGACYILYL). The Cytoplasmic segment spans residues 113-131 (RTLESKLVLFGREVSPAHQ). 2 helical membrane-spanning segments follow: residues 132–148 (YALAGGISFPFFWLAGA) and 149–165 (GSAVFWVLGATLVVIGS). Residues 165–185 (SHAAFHQIEAVDGEELQMEPV) form a required for interaction with GDI1 region. Topologically, residues 166-185 (HAAFHQIEAVDGEELQMEPV) are cytoplasmic. The interval 175–185 (VDGEELQMEPV) is required for interaction with prenylated RAB3A and VAMP2. The homodimerization stretch occupies residues 175–185 (VDGEELQMEPV).

Belongs to the PRA1 family. In terms of assembly, homodimer. Interacts with VAMP2 (synaptobrevin-2), GDI1, and PCLO. Interacts specifically with prenylated Rab proteins; strongly with RAB4B, RAB5A and RAB5C, and weakly with RAB4A, RAB6, RAB7A, RAB17 and RAB22. Interacts with NDRG1. Ubiquitous. Strongest expression found in placenta, pituitary gland, kidney, lung and stomach.

Its subcellular location is the cell membrane. It localises to the cytoplasm. The protein localises to the golgi apparatus. It is found in the cytoplasmic vesicle. The protein resides in the secretory vesicle. Its subcellular location is the synaptic vesicle. In terms of biological role, general Rab protein regulator required for vesicle formation from the Golgi complex. May control vesicle docking and fusion by mediating the action of Rab GTPases to the SNARE complexes. In addition it inhibits the removal of Rab GTPases from the membrane by GDI. The chain is Prenylated Rab acceptor protein 1 (RABAC1) from Homo sapiens (Human).